Here is a 105-residue protein sequence, read N- to C-terminus: Large ribosomal subunit protein uL24 (105 aa).

It belongs to the universal ribosomal protein uL24 family. In terms of assembly, part of the 50S ribosomal subunit.

In terms of biological role, one of two assembly initiator proteins, it binds directly to the 5'-end of the 23S rRNA, where it nucleates assembly of the 50S subunit. Its function is as follows. One of the proteins that surrounds the polypeptide exit tunnel on the outside of the subunit. The chain is Large ribosomal subunit protein uL24 from Vibrio parahaemolyticus serotype O3:K6 (strain RIMD 2210633).